The primary structure comprises 705 residues: Dolichyl-diphosphooligosaccharide--protein glycosyltransferase subunit STT3A (705 aa).

The Cytoplasmic segment spans residues 1-17; the sequence is MTKLGFLRLSYEKQDTL. The helical transmembrane segment at 18-38 threads the bilayer; that stretch reads LKLLILSMAAVLSFSTRLFAV. Residues 39–119 lie on the Lumenal side of the membrane; sequence LRFESVIHEF…IDIRNVCVFL (81 aa). A DXD motif 1 motif is present at residues 47–49; sequence EFD. Asp49 provides a ligand contact to Mn(2+). The chain crosses the membrane as a helical span at residues 120–138; the sequence is APLFSSFTTIVTYHLTKEL. Topologically, residues 139–140 are cytoplasmic; sequence KD. The chain crosses the membrane as a helical span at residues 141–158; sequence AGAGLLAAAMIAVVPGYI. The Lumenal segment spans residues 159–169; it reads SRSVAGSYDNE. The Mn(2+) site is built by Asp167 and Glu169. The DXD motif 2 signature appears at 167 to 169; sequence DNE. A helical membrane pass occupies residues 170–189; it reads GIAIFCMLLTYYMWIKAVKT. Topologically, residues 190 to 191 are cytoplasmic; that stretch reads GS. Residues 192 to 206 traverse the membrane as a helical segment; the sequence is IYWAAKCALAYFYMV. Over 207–211 the chain is Lumenal; that stretch reads SSWGG. Residues 212 to 228 traverse the membrane as a helical segment; that stretch reads YVFLINLIPLHVLVLML. The Cytoplasmic portion of the chain corresponds to 229–233; sequence TGRFS. The helical transmembrane segment at 234 to 259 threads the bilayer; that stretch reads HRIYVAYCTVYCLGTILSMQISFVGF. Residues 260–267 are Lumenal-facing; the sequence is QPVLSSEH. Residues 268–287 traverse the membrane as a helical segment; it reads MAAFGVFGLCQIHAFVDYLR. At 288 to 300 the chain is on the cytoplasmic side; it reads SKLNPQQFEVLFR. The chain crosses the membrane as a helical span at residues 301-321; sequence SVISLVGFVLLTVGALLMLTG. Over 322–356 the chain is Lumenal; the sequence is KISPWTGRFYSLLDPSYAKNNIPIIASVSEHQPTT. Residues 348–351 carry the SVSE motif motif; sequence SVSE. Residues 357–379 form a helical membrane-spanning segment; the sequence is WSSYYFDLQLLVFMFPVGLYYCF. Residues 380–385 are Cytoplasmic-facing; the sequence is SNLSDA. A helical transmembrane segment spans residues 386 to 402; that stretch reads RIFIIMYGVTSMYFSAV. At 403–406 the chain is on the lumenal side; it reads MVRL. Arg405 contributes to the dolichyl diphosphooligosaccharide binding site. Residues 407–428 form a helical membrane-spanning segment; it reads MLVLAPVMCILSGIGVSQVLST. Over 429-453 the chain is Cytoplasmic; it reads YMKNLDISRPDKKSKKQQDSTYPIK. Residues 454–473 form a helical membrane-spanning segment; it reads NEVASGMILVMAFFLITYTF. The Lumenal portion of the chain corresponds to 474–705; it reads HSTWVTSEAY…DLDNRGLSRT (232 aa). The interval 525–527 is interacts with target acceptor peptide in protein substrate; the sequence is WWD. Residues 525–529 carry the WWDYG motif motif; that stretch reads WWDYG. Tyr530 lines the dolichyl diphosphooligosaccharide pocket. 2 N-linked (GlcNAc...) asparagine glycosylation sites follow: Asn537 and Asn544. N-linked (GlcNAc...) (high mannose) asparagine glycosylation is present at Asn548. The DK motif signature appears at 592–599; sequence DINKFLWM.

The protein belongs to the STT3 family. In terms of assembly, component of the oligosaccharyltransferase (OST) complex. There are 2 OST complexes, OST-A and OST-B, which contain STT3A or STT3B as catalytic subunit, respectively. OST-A and OST-B contain common core subunits RPN1, RPN2, OST48, OST4, DAD1 and TMEM258, and OST-A contains DC2/OSTC and KRTCAP2/KCP2 specific accessory subunits. OST-A complex assembly occurs through the formation of 3 subcomplexes. Subcomplex 1 contains RPN1 and TMEM258, subcomplex 2 contains the OST-A-specific subunits STT3A, DC2/OSTC, and KCP2 as well as the core subunit OST4, and subcomplex 3 contains RPN2, DAD1, and OST48. The OST-A complex can form stable complexes with the Sec61 complex or with both the Sec61 and TRAP complexes. Mg(2+) serves as cofactor. Requires Mn(2+) as cofactor.

The protein resides in the endoplasmic reticulum. It is found in the endoplasmic reticulum membrane. The catalysed reaction is a di-trans,poly-cis-dolichyl diphosphooligosaccharide + L-asparaginyl-[protein] = N(4)-(oligosaccharide-(1-&gt;4)-N-acetyl-beta-D-glucosaminyl-(1-&gt;4)-N-acetyl-beta-D-glucosaminyl)-L-asparaginyl-[protein] + a di-trans,poly-cis-dolichyl diphosphate + H(+). It participates in protein modification; protein glycosylation. Catalytic subunit of the oligosaccharyl transferase (OST) complex that catalyzes the initial transfer of a defined glycan (Glc(3)Man(9)GlcNAc(2) in eukaryotes) from the lipid carrier dolichol-pyrophosphate to an asparagine residue within an Asn-X-Ser/Thr consensus motif in nascent polypeptide chains, the first step in protein N-glycosylation. N-glycosylation occurs cotranslationally and the complex associates with the Sec61 complex at the channel-forming translocon complex that mediates protein translocation across the endoplasmic reticulum (ER). All subunits are required for a maximal enzyme activity. This subunit contains the active site and the acceptor peptide and donor lipid-linked oligosaccharide (LLO) binding pockets. STT3A is present in the majority of OST complexes and mediates cotranslational N-glycosylation of most sites on target proteins, while STT3B-containing complexes are required for efficient post-translational glycosylation and mediate glycosylation of sites that have been skipped by STT3A. STT3A-containing OST-A complex is also required to prevent hyperglycosylation of some target proteins by preventing glycosylation of facultative sites before folding of target proteins is completed. The polypeptide is Dolichyl-diphosphooligosaccharide--protein glycosyltransferase subunit STT3A (Mus musculus (Mouse)).